Reading from the N-terminus, the 324-residue chain is YPNTFWMNPQYLIKLEEEDEDQEDGESGCTFLVGLIQKHRRRQRKMGEDMHTIGFGIYEVPEELTGQTNIHLSKNFFLTHRARERSDTFINLREVLNRFKLPPGEYILVPSTFEPNKDGDFCIRVFSEKKADYQVVDDEIEADLEENDASEDDIDDGFRRLFAQLAGEDAEISAFELQTILRRVLAKRQDIKSDGFSIETCRIMVDMLDSDGSAKLGLKEFYILWTKIQKYQKIYREIDVDRSGTMNSYEMRKALEEAGFKLPCQLHQVIVARFADDQLIIDFDNFVRCLVRLETLFRISKQLDSENTGTIELDLISWLCFSVL.

A domain III region spans residues 1 to 138 (YPNTFWMNPQ…KKADYQVVDD (138 aa)). The linker stretch occupies residues 139–153 (EIEADLEENDASEDD). The domain IV stretch occupies residues 158–324 (FRRLFAQLAG…LISWLCFSVL (167 aa)). Alanine 166, aspartate 169, glutamate 171, glutamate 176, aspartate 209, aspartate 211, serine 213, lysine 215, glutamate 220, aspartate 239, aspartate 241, serine 243, threonine 245, glutamate 250, aspartate 282, and asparagine 285 together coordinate Ca(2+). EF-hand domains are found at residues 190 to 224 (DIKS…FYIL) and 226 to 261 (TKIQ…AGFK).

This sequence belongs to the peptidase C2 family. Forms a heterodimer with a small (regulatory) subunit (CAPNS1). Interacts with CPEB3; this leads to cleavage of CPEB3. It depends on Ca(2+) as a cofactor. As to expression, ubiquitous.

It is found in the cytoplasm. Its subcellular location is the cell membrane. It catalyses the reaction Broad endopeptidase specificity.. Activated by 200-1000 micromolar concentrations of calcium and inhibited by calpastatin. Calcium-regulated non-lysosomal thiol-protease which catalyzes limited proteolysis of substrates involved in cytoskeletal remodeling and signal transduction. Proteolytically cleaves MYOC at 'Arg-226'. Proteolytically cleaves CPEB3 following neuronal stimulation which abolishes CPEB3 translational repressor activity, leading to translation of CPEB3 target mRNAs. The polypeptide is Calpain-2 catalytic subunit (CAPN2) (Sus scrofa (Pig)).